A 174-amino-acid chain; its full sequence is Peptide deformylase (174 aa).

Fe cation contacts are provided by Cys96 and His138. Glu139 is an active-site residue. His142 contributes to the Fe cation binding site.

It belongs to the polypeptide deformylase family. It depends on Fe(2+) as a cofactor.

It catalyses the reaction N-terminal N-formyl-L-methionyl-[peptide] + H2O = N-terminal L-methionyl-[peptide] + formate. Its function is as follows. Removes the formyl group from the N-terminal Met of newly synthesized proteins. Requires at least a dipeptide for an efficient rate of reaction. N-terminal L-methionine is a prerequisite for activity but the enzyme has broad specificity at other positions. The sequence is that of Peptide deformylase from Nautilia profundicola (strain ATCC BAA-1463 / DSM 18972 / AmH).